A 668-amino-acid chain; its full sequence is BTB/POZ domain-containing protein At5g66560 (668 aa).

In terms of domain architecture, BTB spans 21–133 (SDIEIEVDDM…CYGVKMDLSA (113 aa)). Positions 73–84 (ETDKKGKGHEIE) are enriched in basic and acidic residues. Positions 73–98 (ETDKKGKGHEIEDDKEEEEVEEQEIE) are disordered. Residues 85 to 98 (DDKEEEEVEEQEIE) are compositionally biased toward acidic residues. The region spanning 254-530 (ELWFEDLTQL…VQVLFFEQLQ (277 aa)) is the NPH3 domain. The residue at position 471 (Tyr471) is a Phosphotyrosine.

Belongs to the NPH3 family.

It participates in protein modification; protein ubiquitination. In terms of biological role, may act as a substrate-specific adapter of an E3 ubiquitin-protein ligase complex (CUL3-RBX1-BTB) which mediates the ubiquitination and subsequent proteasomal degradation of target proteins. In Arabidopsis thaliana (Mouse-ear cress), this protein is BTB/POZ domain-containing protein At5g66560.